The chain runs to 476 residues: Aspartyl/glutamyl-tRNA(Asn/Gln) amidotransferase subunit B (476 aa).

This sequence belongs to the GatB/GatE family. GatB subfamily. Heterotrimer of A, B and C subunits.

It carries out the reaction L-glutamyl-tRNA(Gln) + L-glutamine + ATP + H2O = L-glutaminyl-tRNA(Gln) + L-glutamate + ADP + phosphate + H(+). The catalysed reaction is L-aspartyl-tRNA(Asn) + L-glutamine + ATP + H2O = L-asparaginyl-tRNA(Asn) + L-glutamate + ADP + phosphate + 2 H(+). Allows the formation of correctly charged Asn-tRNA(Asn) or Gln-tRNA(Gln) through the transamidation of misacylated Asp-tRNA(Asn) or Glu-tRNA(Gln) in organisms which lack either or both of asparaginyl-tRNA or glutaminyl-tRNA synthetases. The reaction takes place in the presence of glutamine and ATP through an activated phospho-Asp-tRNA(Asn) or phospho-Glu-tRNA(Gln). The polypeptide is Aspartyl/glutamyl-tRNA(Asn/Gln) amidotransferase subunit B (Geobacillus kaustophilus (strain HTA426)).